Reading from the N-terminus, the 298-residue chain is Pheromone-regulated membrane protein 9 (298 aa).

Over 1–111 (MSPQYHFYFV…YWIYEVTRHK (111 aa)) the chain is Cytoplasmic. A helical membrane pass occupies residues 112–132 (AAVILLVLIVTSILLLVFFYN). Over 133-137 (TEFCV) the chain is Extracellular. The helical transmembrane segment at 138 to 158 (AFEILLFSFCFPGTCMVVIAF) threads the bilayer. Residues 159 to 298 (SEPIGDREFK…QEYPGVDEFF (140 aa)) are Cytoplasmic-facing. The disordered stretch occupies residues 235 to 262 (SSASNVKDAQSNDETAGTPNEAAESSSF). The segment at 297–298 (FF) is COPII binding.

This sequence belongs to the DUP/COS family. Interacts with PRM8. Binds to COPII coated vesicles.

It is found in the cell membrane. Functionally, may be involved in endoplasmic reticulum exit trafficking of proteins. In Saccharomyces cerevisiae (strain ATCC 204508 / S288c) (Baker's yeast), this protein is Pheromone-regulated membrane protein 9 (PRM9).